A 125-amino-acid chain; its full sequence is Neuraminyllactose-binding hemagglutinin (125 aa).

The segment at 92–97 (KRTTQK) is N-acetyl-neuraminyl-alpha(2,3)-lactose binding motif.

The protein localises to the cell outer membrane. The chain is Neuraminyllactose-binding hemagglutinin (hpaA) from Helicobacter acinonychis (Helicobacter acinonyx).